Consider the following 433-residue polypeptide: Glutamate-1-semialdehyde 2,1-aminomutase (433 aa).

K269 carries the N6-(pyridoxal phosphate)lysine modification.

It belongs to the class-III pyridoxal-phosphate-dependent aminotransferase family. HemL subfamily. As to quaternary structure, homodimer. Pyridoxal 5'-phosphate serves as cofactor.

Its subcellular location is the cytoplasm. It catalyses the reaction (S)-4-amino-5-oxopentanoate = 5-aminolevulinate. The protein operates within porphyrin-containing compound metabolism; protoporphyrin-IX biosynthesis; 5-aminolevulinate from L-glutamyl-tRNA(Glu): step 2/2. The polypeptide is Glutamate-1-semialdehyde 2,1-aminomutase (Renibacterium salmoninarum (strain ATCC 33209 / DSM 20767 / JCM 11484 / NBRC 15589 / NCIMB 2235)).